The chain runs to 328 residues: Probable ABC transporter permease YtrC (328 aa).

The next 8 membrane-spanning stretches (helical) occupy residues 16–36 (VVIL…IVNT), 60–80 (ISNL…CFLG), 110–130 (GFVI…LILV), 144–164 (IGVI…GALT), 167–187 (AFAQ…IIAL), 236–256 (YLLL…FISF), 277–297 (VQIL…YYTG), and 300–320 (IIGY…VSYF).

Belongs to the ABC-5 integral membrane protein family. In terms of assembly, the complex is composed of 2 ATP-binding proteins (YtrB and YtrE), 2 transmembrane proteins (YtrC and YtrD) and a solute-binding protein (YtrF).

The protein localises to the cell membrane. In terms of biological role, part of the ABC transporter complex YtrBCDEF that plays a role in acetoin utilization during stationary phase and sporulation. This is Probable ABC transporter permease YtrC (ytrC) from Bacillus subtilis (strain 168).